The following is a 218-amino-acid chain: Cytochrome b6 (218 aa).

Residues 35–55 (IFYCLGGITLVCFLIQFATGF) traverse the membrane as a helical segment. Cys-38 is a binding site for heme c. The heme b site is built by His-89 and His-103. 3 helical membrane-spanning segments follow: residues 93 to 113 (ASMM…TGGF), 119 to 139 (LTWV…VTGY), and 189 to 209 (LHTF…FLMI). Positions 190 and 205 each coordinate heme b.

It belongs to the cytochrome b family. PetB subfamily. In terms of assembly, the 4 large subunits of the cytochrome b6-f complex are cytochrome b6, subunit IV (17 kDa polypeptide, PetD), cytochrome f and the Rieske protein, while the 4 small subunits are PetG, PetL, PetM and PetN. The complex functions as a dimer. It depends on heme b as a cofactor. The cofactor is heme c.

It is found in the cellular thylakoid membrane. In terms of biological role, component of the cytochrome b6-f complex, which mediates electron transfer between photosystem II (PSII) and photosystem I (PSI), cyclic electron flow around PSI, and state transitions. In Prochlorococcus marinus (strain SARG / CCMP1375 / SS120), this protein is Cytochrome b6.